Reading from the N-terminus, the 259-residue chain is Dolichol-phosphate mannosyltransferase subunit 1 (259 aa).

At Ala-2 the chain carries N-acetylalanine. Ser-3 bears the Phosphoserine mark. GDP-alpha-D-mannose-binding residues include Pro-31, Tyr-33, Glu-35, Ile-62, Asp-64, Asp-117, Ala-118, Asp-119, Arg-146, Arg-233, and Lys-239. Asp-119 is a binding site for Mg(2+). Asp-119 contributes to the Mn(2+) binding site.

This sequence belongs to the glycosyltransferase 2 family. Component of the dolichol-phosphate mannose (DPM) synthase complex composed of DPM1, DPM2 and DPM3; within the complex, directly interacts with DPM3. This interaction may stabilize DPM1. It depends on Mg(2+) as a cofactor. Requires Mn(2+) as cofactor. Ca(2+) is required as a cofactor.

The protein localises to the endoplasmic reticulum. It carries out the reaction a di-trans,poly-cis-dolichyl phosphate + GDP-alpha-D-mannose = a di-trans,poly-cis-dolichyl beta-D-mannosyl phosphate + GDP. Its pathway is protein modification; protein glycosylation. Its function is as follows. Transfers mannose from GDP-mannose to dolichol monophosphate to form dolichol phosphate mannose (Dol-P-Man) which is the mannosyl donor in pathways leading to N-glycosylation, glycosyl phosphatidylinositol membrane anchoring, and O-mannosylation of proteins; catalytic subunit of the dolichol-phosphate mannose (DPM) synthase complex. In Sus scrofa (Pig), this protein is Dolichol-phosphate mannosyltransferase subunit 1 (DPM1).